A 101-amino-acid polypeptide reads, in one-letter code: Integration host factor subunit beta (101 aa).

Belongs to the bacterial histone-like protein family. Heterodimer of an alpha and a beta chain.

This protein is one of the two subunits of integration host factor, a specific DNA-binding protein that functions in genetic recombination as well as in transcriptional and translational control. This chain is Integration host factor subunit beta, found in Nitrobacter hamburgensis (strain DSM 10229 / NCIMB 13809 / X14).